The primary structure comprises 287 residues: Ribosomal RNA small subunit methyltransferase I (287 aa).

The protein belongs to the methyltransferase superfamily. RsmI family.

The protein resides in the cytoplasm. It carries out the reaction cytidine(1402) in 16S rRNA + S-adenosyl-L-methionine = 2'-O-methylcytidine(1402) in 16S rRNA + S-adenosyl-L-homocysteine + H(+). Functionally, catalyzes the 2'-O-methylation of the ribose of cytidine 1402 (C1402) in 16S rRNA. This Helicobacter pylori (strain ATCC 700392 / 26695) (Campylobacter pylori) protein is Ribosomal RNA small subunit methyltransferase I.